We begin with the raw amino-acid sequence, 421 residues long: Phosphatidate cytidylyltransferase 1 (421 aa).

The residue at position 1 (methionine 1) is an N-acetylmethionine. Residues 1-12 (MEEENVTSSPST) are compositionally biased toward polar residues. Positions 1-26 (MEEENVTSSPSTPVHRLRHRRRSNEV) are disordered. 8 helical membrane-spanning segments follow: residues 60 to 80 (IGGF…MVVV), 102 to 122 (LPYI…FVYG), 149 to 169 (YHMA…ILTL), 183 to 203 (WTHM…ANIF), 206 to 226 (IFWF…AYIF), 246 to 266 (GFIG…NILG), 321 to 341 (LCLG…ASGF), and 369 to 389 (VMAV…SVSV).

The protein belongs to the CDS family. The cofactor is Mg(2+).

It localises to the membrane. It catalyses the reaction a 1,2-diacyl-sn-glycero-3-phosphate + CTP + H(+) = a CDP-1,2-diacyl-sn-glycerol + diphosphate. Its pathway is phospholipid metabolism; CDP-diacylglycerol biosynthesis; CDP-diacylglycerol from sn-glycerol 3-phosphate: step 3/3. Its function is as follows. May be involved in the synthesis of minor phospholipids and in modulation of IP3-mediated signal transduction. The protein is Phosphatidate cytidylyltransferase 1 of Arabidopsis thaliana (Mouse-ear cress).